The primary structure comprises 114 residues: MEKPLFPLVPLHWFGFGYTALVVSGGIVGYVKTGSVPSLAAGLLFGSLAGLGAYQLYQDPRNVWGFLAATSVTFVGVMGMRSYYYGKFMPVGLIAGASLLMAAKVGVRMLMTSD.

The next 4 membrane-spanning stretches (helical) occupy residues 8–28 (LVPL…GGIV), 34–54 (GSVP…LGAY), 60–80 (PRNV…VMGM), and 83–103 (YYYG…LMAA).

It belongs to the TMEM14 family. As to quaternary structure, interacts with IQGAP1; this interaction promotes phosphorylation and nuclear translocation of IQGAP1. Mainly expressed in the outer subventricular zone (OSVZ) of the fetal brains.

Its subcellular location is the membrane. Functionally, primate-specific protein involved in cortical expansion and folding in the developing neocortex. May drive neural progenitor proliferation through nuclear translocation of IQGAP1, which in turn promotes G1/S cell cycle transitions. The chain is Transmembrane protein 14B (TMEM14B) from Homo sapiens (Human).